The following is a 431-amino-acid chain: Glutamate-1-semialdehyde 2,1-aminomutase (431 aa).

K269 carries the N6-(pyridoxal phosphate)lysine modification.

The protein belongs to the class-III pyridoxal-phosphate-dependent aminotransferase family. HemL subfamily. Homodimer. Pyridoxal 5'-phosphate serves as cofactor.

The protein resides in the cytoplasm. It carries out the reaction (S)-4-amino-5-oxopentanoate = 5-aminolevulinate. It participates in porphyrin-containing compound metabolism; protoporphyrin-IX biosynthesis; 5-aminolevulinate from L-glutamyl-tRNA(Glu): step 2/2. The protein operates within porphyrin-containing compound metabolism; chlorophyll biosynthesis. In Prosthecochloris aestuarii (strain DSM 271 / SK 413), this protein is Glutamate-1-semialdehyde 2,1-aminomutase.